Reading from the N-terminus, the 1106-residue chain is Probable ATP-citrate synthase (1106 aa).

Residues N358, T360, and R391 each coordinate citrate. The segment covering 442-459 has biased composition (polar residues); that stretch reads APQTTGQFLLSPERNTGG. The segment at 442-478 is disordered; sequence APQTTGQFLLSPERNTGGTERAPPSPAANATPTEHPL. Residues 701–721 and 752–778 each bind ATP; these read VIRY…EVGG and ITSE…KNAA. Residue E718 coordinates Mg(2+). H760 functions as the Tele-phosphohistidine intermediate in the catalytic mechanism. 779–789 lines the CoA pocket; that stretch reads LRASGALVPES.

In the N-terminal section; belongs to the succinate/malate CoA ligase beta subunit family. The protein in the C-terminal section; belongs to the succinate/malate CoA ligase alpha subunit family. In terms of assembly, homotetramer.

It is found in the cytoplasm. It catalyses the reaction oxaloacetate + acetyl-CoA + ADP + phosphate = citrate + ATP + CoA. In terms of biological role, catalyzes the cleavage of citrate into oxaloacetate and acetyl-CoA, the latter serving as common substrate in multiple biochemical reactions in protein, carbohydrate and lipid metabolism. This Caenorhabditis elegans protein is Probable ATP-citrate synthase.